A 446-amino-acid polypeptide reads, in one-letter code: ATP synthase subunit b-delta (446 aa).

The ATP synthase subunit b stretch occupies residues 1-168; sequence MSTFIGQLVG…PKGADVEYPL (168 aa). Residues 4-24 form a helical membrane-spanning segment; that stretch reads FIGQLVGFAAIVYLVWWYVVP. The interval 169-446 is ATP synthase subunit delta; it reads LAKMRSASRR…LVAAEAALPD (278 aa).

The protein in the N-terminal section; belongs to the ATPase B chain family. It in the C-terminal section; belongs to the ATPase delta chain family. In terms of assembly, F-type ATPases have 2 components, F(1) - the catalytic core - and F(0) - the membrane proton channel. F(1) has five subunits: alpha(3), beta(3), gamma(1), delta(1), epsilon(1). F(0) has three main subunits: a(1), b(2) and c(10-14). The alpha and beta chains form an alternating ring which encloses part of the gamma chain. F(1) is attached to F(0) by a central stalk formed by the gamma and epsilon chains, while a peripheral stalk is formed by the delta and b chains.

The protein localises to the cell membrane. In terms of biological role, f(1)F(0) ATP synthase produces ATP from ADP in the presence of a proton or sodium gradient. F-type ATPases consist of two structural domains, F(1) containing the extramembraneous catalytic core and F(0) containing the membrane proton channel, linked together by a central stalk and a peripheral stalk. During catalysis, ATP synthesis in the catalytic domain of F(1) is coupled via a rotary mechanism of the central stalk subunits to proton translocation. Its function is as follows. This fusion protein includes a component of the F(0) channel (subunit b) and of the F(1) subunit (subunit delta). Two copies of subunit b and one of delta together form the peripheral 'stator' stalk which links F(1) to F(0). The protein is ATP synthase subunit b-delta (atpFH) of Mycobacterium leprae (strain Br4923).